The sequence spans 94 residues: MSLFDFFRRPTSAPVARERLQILLAHERAVIGRSDLIAILREEILAVIAKHVTMEPEKVNVKMERGDTVSTLEVEVEVPTSATARAGKKVVEAA.

The protein belongs to the MinE family.

Its function is as follows. Prevents the cell division inhibition by proteins MinC and MinD at internal division sites while permitting inhibition at polar sites. This ensures cell division at the proper site by restricting the formation of a division septum at the midpoint of the long axis of the cell. The sequence is that of Cell division topological specificity factor from Beijerinckia indica subsp. indica (strain ATCC 9039 / DSM 1715 / NCIMB 8712).